A 306-amino-acid polypeptide reads, in one-letter code: ATP-dependent (S)-NAD(P)H-hydrate dehydratase (306 aa).

In terms of domain architecture, YjeF C-terminal spans 4–300 (LIDLFKPMIP…NQISNGFEDL (297 aa)). (6S)-NADPHX-binding positions include Gly-104 and 157 to 163 (NFVEFKS). Residues 197-201 (KGKED) and 216-225 (GMPRRCGGQG) each bind ATP. A (6S)-NADPHX-binding site is contributed by Asp-226.

It belongs to the NnrD/CARKD family. It depends on Mg(2+) as a cofactor.

It carries out the reaction (6S)-NADHX + ATP = ADP + phosphate + NADH + H(+). The catalysed reaction is (6S)-NADPHX + ATP = ADP + phosphate + NADPH + H(+). Catalyzes the dehydration of the S-form of NAD(P)HX at the expense of ATP, which is converted to ADP. Together with NAD(P)HX epimerase, which catalyzes the epimerization of the S- and R-forms, the enzyme allows the repair of both epimers of NAD(P)HX, a damaged form of NAD(P)H that is a result of enzymatic or heat-dependent hydration. This is ATP-dependent (S)-NAD(P)H-hydrate dehydratase from Dictyostelium discoideum (Social amoeba).